Consider the following 22-residue polypeptide: Putative ORF3b protein (22 aa).

Acts as an interferon antagonist when expressed ex vivo. This is Putative ORF3b protein from Severe acute respiratory syndrome coronavirus 2 (2019-nCoV).